Consider the following 408-residue polypeptide: GPI transamidase component GAB1 homolog (408 aa).

10 consecutive transmembrane segments (helical) span residues 9–29, 66–86, 88–108, 125–145, 149–169, 207–227, 266–286, 303–323, 339–359, and 370–390; these read LLGL…TWIA, VFYQ…LGGI, VTRF…YLIA, PLWI…GIAC, MILN…SYAI, IFVV…FFLN, FFLF…SIRL, LFKA…LPIF, AIVF…TLGC, and LILA…LLLV. A may be involved in recognition of long-chain fatty acids in GPI region spans residues 247–267; sequence PNLGLWWYFFTEMFNEFRTFF.

The protein belongs to the PIGU family. Forms a complex with PIG-S homolog, PIG-T homolog and GPI8.

It localises to the endoplasmic reticulum membrane. It participates in glycolipid biosynthesis; glycosylphosphatidylinositol-anchor biosynthesis. Component of the GPI transamidase complex. May be involved in the recognition of either the GPI attachment signal or the lipid portion of GPI. In Schizosaccharomyces pombe (strain 972 / ATCC 24843) (Fission yeast), this protein is GPI transamidase component GAB1 homolog.